A 140-amino-acid polypeptide reads, in one-letter code: UPF0299 membrane protein CGSHiGG_01475 (140 aa).

4 consecutive transmembrane segments (helical) span residues 1–21, 33–52, 60–80, and 92–112; these read MIQK…MLYL, VPGS…TRVI, GASL…VGII, and ILLV…GFLG.

This sequence belongs to the UPF0299 family.

The protein localises to the cell inner membrane. This chain is UPF0299 membrane protein CGSHiGG_01475, found in Haemophilus influenzae (strain PittGG).